A 173-amino-acid chain; its full sequence is Pathogenesis-related protein 1A/1B (173 aa).

The signal sequence occupies residues Met1–Ala20.

It belongs to the thaumatin family.

The protein is Pathogenesis-related protein 1A/1B of Hordeum vulgare (Barley).